Consider the following 206-residue polypeptide: Large ribosomal subunit protein uL4 (206 aa).

Belongs to the universal ribosomal protein uL4 family. Part of the 50S ribosomal subunit.

Functionally, one of the primary rRNA binding proteins, this protein initially binds near the 5'-end of the 23S rRNA. It is important during the early stages of 50S assembly. It makes multiple contacts with different domains of the 23S rRNA in the assembled 50S subunit and ribosome. Its function is as follows. Forms part of the polypeptide exit tunnel. This Paracoccus denitrificans (strain Pd 1222) protein is Large ribosomal subunit protein uL4.